A 1812-amino-acid chain; its full sequence is Breast cancer type 1 susceptibility protein homolog (1812 aa).

The residue at position 1 (methionine 1) is an N-acetylmethionine. An RING-type zinc finger spans residues 24-65; sequence CPICLELIKEPVSTKCDHIFCKFCMLKLLNQKKGPSQCPLCK. A Glycyl lysine isopeptide (Lys-Gly) (interchain with G-Cter in SUMO2) cross-link involves residue lysine 109. A Phosphoserine modification is found at serine 114. A compositionally biased stretch (basic residues) spans 165-176; sequence KKNRQTQPRKKS. The tract at residues 165–198 is disordered; that stretch reads KKNRQTQPRKKSVYIELDSDSSEETVTKPGDCSV. Lysine 298 is covalently cross-linked (Glycyl lysine isopeptide (Lys-Gly) (interchain with G-Cter in SUMO2)). Residues 321–332 show a composition bias toward polar residues; it reads SKGTCNDRQVPS. Residues 321–362 form a disordered region; the sequence is SKGTCNDRQVPSTGEKVGPNADSLSDREKWTHPQSLCPENSG. Residue lysine 336 forms a Glycyl lysine isopeptide (Lys-Gly) (interchain with G-Cter in SUMO2) linkage. Over residues 352 to 362 the composition is skewed to polar residues; it reads HPQSLCPENSG. Phosphoserine is present on serine 392. Glycyl lysine isopeptide (Lys-Gly) (interchain with G-Cter in SUMO2) cross-links involve residues lysine 440, lysine 456, and lysine 512. 2 disordered regions span residues 492–581 and 640–767; these read PFTN…AKSI and SEET…VSDT. A compositionally biased stretch (polar residues) spans 538-556; the sequence is QAVSTTSNCQENKIAGSNL. 2 stretches are compositionally biased toward basic and acidic residues: residues 557–572 and 669–679; these read QKEK…RKEP and ADAKKNEPNEH. 3 positions are modified to phosphoserine: serine 686, serine 706, and serine 717. 2 stretches are compositionally biased toward polar residues: residues 702-733 and 758-767; these read TSCS…QMSD and STSVSLVSDT. At serine 831 the chain carries Phosphoserine. 5 disordered regions span residues 864 to 899, 947 to 995, 1030 to 1056, 1147 to 1185, and 1205 to 1230; these read KPRS…GQEE, GLSA…STEM, VCST…PPLD, RESS…EDED, and CSSA…SSSD. Positions 947-972 are enriched in polar residues; sequence GLSATGKSGISQNSHFKQSVSPIRSS. The residue at position 971 (serine 971) is a Phosphoserine; by CHEK2. The span at 973-991 shows a compositional bias: basic and acidic residues; the sequence is IKTDNRKPLTEGRFERHTS. Phosphoserine is present on serine 992. Lysine 1048 participates in a covalent cross-link: Glycyl lysine isopeptide (Lys-Gly) (interchain with G-Cter in SUMO2). A compositionally biased stretch (polar residues) spans 1151 to 1166; it reads RSPSPVTHASKSQSLH. Residues serine 1152, serine 1154, serine 1174, and serine 1180 each carry the phosphoserine modification. Acidic residues predominate over residues 1175-1185; it reads SEESDSTEDED. Serine 1241 carries the phosphoserine modification. The tract at residues 1244–1289 is disordered; sequence HQFSEDPRCSGSMFSSQHSAAQGSTANANSQDSNFIPPSKQRSHQC. Polar residues predominate over residues 1255-1279; that stretch reads SMFSSQHSAAQGSTANANSQDSNFI. Phosphoserine occurs at positions 1297 and 1303. Residues 1313–1323 are compositionally biased toward acidic residues; sequence EEDNDQEEDSI. The segment at 1313-1343 is disordered; it reads EEDNDQEEDSIIPDSEASGYESETNLSEDCS. The segment covering 1333-1343 has biased composition (polar residues); that stretch reads ESETNLSEDCS. Serine 1343 carries the post-translational modification Phosphoserine. Threonine 1350 is modified (phosphothreonine). The interaction with PALB2 stretch occupies residues 1353 to 1380; sequence RATMKYNLIKLQQEMAHLEAVLEQRGNQ. A phosphoserine mark is found at serine 1413, serine 1481, and serine 1495. The disordered stretch occupies residues 1437–1547; it reads HLEGPTSGDD…AHIGTTPAST (111 aa). The span at 1492-1504 shows a compositional bias: polar residues; that stretch reads EASSEPHNSTGQS. The segment covering 1527–1538 has biased composition (basic and acidic residues); the sequence is RDPESESPKEPA. 2 consecutive BRCT domains span residues 1585 to 1679 and 1698 to 1797; these read SEER…EFEV and SREK…AYLV.

As to quaternary structure, heterodimer with BARD1. Part of the BRCA1-associated genome surveillance complex (BASC), which contains BRCA1, MSH2, MSH6, MLH1, ATM, BLM, PMS2 and the MRE11-RAD50-NBN protein (MRN) complex. This association could be a dynamic process changing throughout the cell cycle and within subnuclear domains. Component of the BRCA1-A complex, at least composed of BRCA1, BARD1, UIMC1/RAP80, ABRAXAS1, BRCC3/BRCC36, BABAM2 and BABAM1/NBA1. Interacts (via the BRCT domains) with ABRAXAS1 (phosphorylated form); this is important for recruitment to sites of DNA damage. Can form a heterotetramer with two molecules of ABRAXAS1 (phosphorylated form). Component of the BRCA1-RBBP8 complex. Interacts (via the BRCT domains) with RBBP8 ('Ser-327' phosphorylated form); the interaction ubiquitinates RBBP8, regulates CHEK1 activation, and involves RBBP8 in BRCA1-dependent G2/M checkpoint control on DNA damage. Associates with RNA polymerase II holoenzyme. Interacts with SMC1A, NELFB, DCLRE1C, CLSPN. CHEK1, CHEK2, BAP1, BRCC3, UBXN1 and PCLAF. Interacts (via BRCT domains) with BRIP1 (phosphorylated form). Interacts with FANCD2 (ubiquitinated form). Interacts with H2AX (phosphorylated on 'Ser-140'). Interacts (via the BRCT domains) with ACACA (phosphorylated form); the interaction prevents dephosphorylation of ACACA. Part of a BRCA complex containing BRCA1, BRCA2 and PALB2. Interacts directly with PALB2; the interaction is essential for its function in HRR. Interacts directly with BRCA2; the interaction occurs only in the presence of PALB2 which serves as the bridging protein. Interacts (via the BRCT domains) with LMO4; the interaction represses the transcriptional activity of BRCA1. Interacts (via the BRCT domains) with CCAR2 (via N-terminus); the interaction represses the transcriptional activator activity of BRCA1. Interacts with EXD2. Interacts (via C-terminus) with DHX9; this interaction is direct and links BRCA1 to the RNA polymerase II holoenzyme. Interacts with DNA helicase ZGRF1; the interaction is increased following DNA damage induction. In terms of processing, phosphorylated in response to IR, UV, and various stimuli that cause checkpoint activation, probably by ATM or ATR. Phosphorylation at Ser-971 by CHEK2 regulates mitotic spindle assembly. Phosphorylation by AURKA regulates centrosomal microtubule nucleation. Post-translationally, autoubiquitinated, undergoes 'Lys-6'-linked polyubiquitination. 'Lys-6'-linked polyubiquitination does not promote degradation. In the embryo, expressed in otic vesicles at day 9.5. At day 10.5, this expression decreases and high levels are found in the neuroectoderm. At days 11-12.5, high levels in differentiating keratinocytes and whisker pad primordia. At days 14-17, expression also observed in kidney epithelial cells. In the adult, highest levels found in spleen, thymus, lymph nodes, epithelial organs, and alveolar and ductal epithelial cells of the mammary gland. Very low levels in brain, kidney, and skin. No expression in heart, liver or lung.

The protein localises to the nucleus. The protein resides in the chromosome. It is found in the cytoplasm. The catalysed reaction is S-ubiquitinyl-[E2 ubiquitin-conjugating enzyme]-L-cysteine + [acceptor protein]-L-lysine = [E2 ubiquitin-conjugating enzyme]-L-cysteine + N(6)-ubiquitinyl-[acceptor protein]-L-lysine.. It functions in the pathway protein modification; protein ubiquitination. Its function is as follows. E3 ubiquitin-protein ligase that specifically mediates the formation of 'Lys-6'-linked polyubiquitin chains and plays a central role in DNA repair by facilitating cellular responses to DNA damage. It is unclear whether it also mediates the formation of other types of polyubiquitin chains. The BRCA1-BARD1 heterodimer coordinates a diverse range of cellular pathways such as DNA damage repair, ubiquitination and transcriptional regulation to maintain genomic stability. Regulates centrosomal microtubule nucleation. Required for appropriate cell cycle arrests after ionizing irradiation in both the S-phase and the G2 phase of the cell cycle. Required for FANCD2 targeting to sites of DNA damage. Inhibits lipid synthesis by binding to inactive phosphorylated ACACA and preventing its dephosphorylation. Contributes to homologous recombination repair (HRR) via its direct interaction with PALB2, fine-tunes recombinational repair partly through its modulatory role in the PALB2-dependent loading of BRCA2-RAD51 repair machinery at DNA breaks. Component of the BRCA1-RBBP8 complex which regulates CHEK1 activation and controls cell cycle G2/M checkpoints on DNA damage via BRCA1-mediated ubiquitination of RBBP8. Acts as a transcriptional activator. The chain is Breast cancer type 1 susceptibility protein homolog (Brca1) from Mus musculus (Mouse).